The following is a 102-amino-acid chain: NADH-quinone oxidoreductase subunit K (102 aa).

3 helical membrane passes run 6–26 (LGQG…GVLV), 30–50 (LLFM…AFIV), and 64–84 (FILV…LILL).

It belongs to the complex I subunit 4L family. NDH-1 is composed of 14 different subunits. Subunits NuoA, H, J, K, L, M, N constitute the membrane sector of the complex.

The protein localises to the cell inner membrane. It catalyses the reaction a quinone + NADH + 5 H(+)(in) = a quinol + NAD(+) + 4 H(+)(out). Its function is as follows. NDH-1 shuttles electrons from NADH, via FMN and iron-sulfur (Fe-S) centers, to quinones in the respiratory chain. The immediate electron acceptor for the enzyme in this species is believed to be ubiquinone. Couples the redox reaction to proton translocation (for every two electrons transferred, four hydrogen ions are translocated across the cytoplasmic membrane), and thus conserves the redox energy in a proton gradient. The chain is NADH-quinone oxidoreductase subunit K from Acidiphilium cryptum (strain JF-5).